Reading from the N-terminus, the 68-residue chain is Protein transport protein Sec61 subunit gamma (68 aa).

Met-1 bears the N-acetylmethionine mark. Topologically, residues 1 to 32 are cytoplasmic; that stretch reads MDQVMQFVEPSRQFVKDSIRLVKRCTKPDRKE. Phosphoserine is present on Ser-18. A helical membrane pass occupies residues 33-61; that stretch reads FQKIAMATAIGFAIMGFIGFFVKLIHIPI. At 62–68 the chain is on the extracellular side; it reads NNIIVGG.

Belongs to the SecE/SEC61-gamma family. As to quaternary structure, the SEC61 channel-forming translocon complex consists of channel-forming core components SEC61A1, SEC61B and SEC61G and different auxiliary components such as SEC62 and SEC63. The SEC61 channel associates with the multi-pass translocon (MPT) complex.

The protein localises to the endoplasmic reticulum membrane. Component of SEC61 channel-forming translocon complex that mediates transport of signal peptide-containing precursor polypeptides across the endoplasmic reticulum (ER). Forms a ribosome receptor and a gated pore in the ER membrane, both functions required for cotranslational translocation of nascent polypeptides. The SEC61 channel is also involved in ER membrane insertion of transmembrane proteins: it mediates membrane insertion of the first few transmembrane segments of proteins, while insertion of subsequent transmembrane regions of multi-pass membrane proteins is mediated by the multi-pass translocon (MPT) complex. The SEC61 channel cooperates with the translocating protein TRAM1 to import nascent proteins into the ER. This Bos taurus (Bovine) protein is Protein transport protein Sec61 subunit gamma (SEC61G).